The following is a 56-amino-acid chain: Large ribosomal subunit protein bL32 (56 aa).

Residues 1–21 form a disordered region; the sequence is MAVQQNRKTRSRRGMRRSHDA. Positions 7-16 are enriched in basic residues; the sequence is RKTRSRRGMR.

It belongs to the bacterial ribosomal protein bL32 family.

The sequence is that of Large ribosomal subunit protein bL32 from Vibrio cholerae serotype O1 (strain ATCC 39541 / Classical Ogawa 395 / O395).